A 126-amino-acid polypeptide reads, in one-letter code: Small ribosomal subunit protein uS12 (126 aa).

A disordered region spans residues 1-28 (MPTINQLVRKGRRKVRTKSKSPALDGNP). Residues 9–19 (RKGRRKVRTKS) show a composition bias toward basic residues. Aspartate 89 carries the 3-methylthioaspartic acid modification. Residues 106 to 126 (GVEKRRRSRSKYGVKRPKAAK) are disordered. Basic residues predominate over residues 109 to 126 (KRRRSRSKYGVKRPKAAK).

The protein belongs to the universal ribosomal protein uS12 family. In terms of assembly, part of the 30S ribosomal subunit. Contacts proteins S8 and S17. May interact with IF1 in the 30S initiation complex.

Functionally, with S4 and S5 plays an important role in translational accuracy. In terms of biological role, interacts with and stabilizes bases of the 16S rRNA that are involved in tRNA selection in the A site and with the mRNA backbone. Located at the interface of the 30S and 50S subunits, it traverses the body of the 30S subunit contacting proteins on the other side and probably holding the rRNA structure together. The combined cluster of proteins S8, S12 and S17 appears to hold together the shoulder and platform of the 30S subunit. This chain is Small ribosomal subunit protein uS12, found in Opitutus terrae (strain DSM 11246 / JCM 15787 / PB90-1).